The primary structure comprises 251 residues: Coproheme decarboxylase (251 aa).

Residues Arg-133, 147-151 (YPMSK), His-174, Gln-187, and Ser-225 contribute to the Fe-coproporphyrin III site. Tyr-147 is an active-site residue.

Belongs to the ChdC family. Type 1 subfamily. It depends on Fe-coproporphyrin III as a cofactor.

It carries out the reaction Fe-coproporphyrin III + 2 H2O2 + 2 H(+) = heme b + 2 CO2 + 4 H2O. It catalyses the reaction Fe-coproporphyrin III + H2O2 + H(+) = harderoheme III + CO2 + 2 H2O. The enzyme catalyses harderoheme III + H2O2 + H(+) = heme b + CO2 + 2 H2O. It functions in the pathway porphyrin-containing compound metabolism; protoheme biosynthesis. Functionally, involved in coproporphyrin-dependent heme b biosynthesis. Catalyzes the decarboxylation of Fe-coproporphyrin III (coproheme) to heme b (protoheme IX), the last step of the pathway. The reaction occurs in a stepwise manner with a three-propionate intermediate. The chain is Coproheme decarboxylase from Listeria welshimeri serovar 6b (strain ATCC 35897 / DSM 20650 / CCUG 15529 / CIP 8149 / NCTC 11857 / SLCC 5334 / V8).